A 461-amino-acid polypeptide reads, in one-letter code: Mycosin-3 (461 aa).

The first 25 residues, 1–25, serve as a signal peptide directing secretion; sequence MIRAAFACLAATVVVAGWWTPPAWA. The Peptidase S8 domain occupies 64–397; that stretch reads DPGVPTPSQT…AGNLDAVAAL (334 aa). Catalysis depends on charge relay system residues Asp95, His126, and Ser342. Residues 432–452 traverse the membrane as a helical segment; it reads AFAGAAALSVLVGLTAATVAI.

Belongs to the peptidase S8 family.

Its subcellular location is the cell membrane. The sequence is that of Mycosin-3 from Mycobacterium tuberculosis (strain ATCC 25618 / H37Rv).